The following is a 172-amino-acid chain: Adenine phosphoribosyltransferase (172 aa).

It belongs to the purine/pyrimidine phosphoribosyltransferase family. In terms of assembly, homodimer.

It is found in the cytoplasm. It carries out the reaction AMP + diphosphate = 5-phospho-alpha-D-ribose 1-diphosphate + adenine. It participates in purine metabolism; AMP biosynthesis via salvage pathway; AMP from adenine: step 1/1. Catalyzes a salvage reaction resulting in the formation of AMP, that is energically less costly than de novo synthesis. This chain is Adenine phosphoribosyltransferase, found in Picosynechococcus sp. (strain ATCC 27264 / PCC 7002 / PR-6) (Agmenellum quadruplicatum).